The primary structure comprises 901 residues: Dipeptidyl-aminopeptidase B (901 aa).

Positions 1–22 are enriched in low complexity; the sequence is MSSPRPSTSSTSSDSGLSVDTT. Positions 1–67 are disordered; sequence MSSPRPSTSS…EPFLPSAKKQ (67 aa). Residues 1-76 are Cytoplasmic-facing; that stretch reads MSSPRPSTSS…QAASGSRTSR (76 aa). Residues 77-97 form a helical; Signal-anchor for type II membrane protein membrane-spanning segment; the sequence is LIWGLVILCVAGWLWGLVLFV. At 98-901 the chain is on the vacuolar side; it reads TQNRSAQQSV…VKRSLPMLVN (804 aa). N-linked (GlcNAc...) asparagine glycans are attached at residues N334 and N625. The Charge relay system role is filled by S739. N793 carries N-linked (GlcNAc...) asparagine glycosylation. Catalysis depends on charge relay system residues D816 and H849.

This sequence belongs to the peptidase S9B family.

The protein localises to the vacuole membrane. It catalyses the reaction Release of an N-terminal dipeptide, Xaa-Yaa-|-Zaa-, from a polypeptide, preferentially when Yaa is Pro, provided Zaa is neither Pro nor hydroxyproline.. Functionally, type IV dipeptidyl-peptidase which removes N-terminal dipeptides sequentially from polypeptides having unsubstituted N-termini provided that the penultimate residue is proline. This Aspergillus niger protein is Dipeptidyl-aminopeptidase B (dapB).